The sequence spans 367 residues: Serine/threonine-protein kinase-transforming protein Rmil (367 aa).

Residues 1–64 (EGGSTAGLSA…DSSDDWEIPD (64 aa)) form a disordered region. Basic and acidic residues predominate over residues 33 to 57 (QRERKSSSSSEDRNRMKTLGRRDSS). The Protein kinase domain occupies 67–327 (ITVGQRIGSG…PQILASIELL (261 aa)). Residues 73–81 (IGSGSFGTV) and Lys93 contribute to the ATP site. Asp186 functions as the Proton acceptor in the catalytic mechanism.

This sequence belongs to the protein kinase superfamily. TKL Ser/Thr protein kinase family. RAF subfamily.

The enzyme catalyses L-seryl-[protein] + ATP = O-phospho-L-seryl-[protein] + ADP + H(+). It carries out the reaction L-threonyl-[protein] + ATP = O-phospho-L-threonyl-[protein] + ADP + H(+). This chain is Serine/threonine-protein kinase-transforming protein Rmil (V-RMIL), found in Avian retrovirus IC10.